The sequence spans 238 residues: Survival of motor neuron-related-splicing factor 30 (238 aa).

One can recognise a Tudor domain in the interval 72 to 132 (SWKVGDKCMA…KPVEEGRKAK (61 aa)). Positions 142–160 (KKEMIAQQREYKKKKALKK) match the Nuclear localization signal motif. At Ser-201 the chain carries Phosphoserine. Residue Lys-219 is modified to N6-acetyllysine.

This sequence belongs to the SMN family. In terms of assembly, associates with spliceosomes. Associates with U4/U5/U6 tri-snRNP and with U2 snRNP.

Its subcellular location is the nucleus speckle. The protein localises to the nucleus. The protein resides in the cajal body. In terms of biological role, involved in spliceosome assembly. The chain is Survival of motor neuron-related-splicing factor 30 (Smndc1) from Mus musculus (Mouse).